The following is a 365-amino-acid chain: Peptide chain release factor 1 (365 aa).

An N5-methylglutamine modification is found at glutamine 242.

It belongs to the prokaryotic/mitochondrial release factor family. Post-translationally, methylated by PrmC. Methylation increases the termination efficiency of RF1.

It is found in the cytoplasm. Peptide chain release factor 1 directs the termination of translation in response to the peptide chain termination codons UAG and UAA. In Fusobacterium nucleatum subsp. nucleatum (strain ATCC 25586 / DSM 15643 / BCRC 10681 / CIP 101130 / JCM 8532 / KCTC 2640 / LMG 13131 / VPI 4355), this protein is Peptide chain release factor 1.